The chain runs to 249 residues: Coproheme decarboxylase (249 aa).

Residues Arg-131, 145–149, His-172, Gln-185, and Ser-223 contribute to the Fe-coproporphyrin III site; that span reads YPMDK. The active site involves Tyr-145.

It belongs to the ChdC family. Type 1 subfamily. The cofactor is Fe-coproporphyrin III.

It catalyses the reaction Fe-coproporphyrin III + 2 H2O2 + 2 H(+) = heme b + 2 CO2 + 4 H2O. The enzyme catalyses Fe-coproporphyrin III + H2O2 + H(+) = harderoheme III + CO2 + 2 H2O. The catalysed reaction is harderoheme III + H2O2 + H(+) = heme b + CO2 + 2 H2O. The protein operates within porphyrin-containing compound metabolism; protoheme biosynthesis. Functionally, involved in coproporphyrin-dependent heme b biosynthesis. Catalyzes the decarboxylation of Fe-coproporphyrin III (coproheme) to heme b (protoheme IX), the last step of the pathway. The reaction occurs in a stepwise manner with a three-propionate intermediate. The protein is Coproheme decarboxylase of Shouchella clausii (strain KSM-K16) (Alkalihalobacillus clausii).